A 274-amino-acid chain; its full sequence is Orotidine 5'-phosphate decarboxylase (274 aa).

Lysine 95 serves as the catalytic Proton donor.

The protein belongs to the OMP decarboxylase family. Type 2 subfamily.

The catalysed reaction is orotidine 5'-phosphate + H(+) = UMP + CO2. The protein operates within pyrimidine metabolism; UMP biosynthesis via de novo pathway; UMP from orotate: step 2/2. This Paracidovorax citrulli (strain AAC00-1) (Acidovorax citrulli) protein is Orotidine 5'-phosphate decarboxylase.